We begin with the raw amino-acid sequence, 357 residues long: S-adenosylmethionine:tRNA ribosyltransferase-isomerase (357 aa).

It belongs to the QueA family. Monomer.

The protein resides in the cytoplasm. The catalysed reaction is 7-aminomethyl-7-carbaguanosine(34) in tRNA + S-adenosyl-L-methionine = epoxyqueuosine(34) in tRNA + adenine + L-methionine + 2 H(+). The protein operates within tRNA modification; tRNA-queuosine biosynthesis. Functionally, transfers and isomerizes the ribose moiety from AdoMet to the 7-aminomethyl group of 7-deazaguanine (preQ1-tRNA) to give epoxyqueuosine (oQ-tRNA). The sequence is that of S-adenosylmethionine:tRNA ribosyltransferase-isomerase from Buchnera aphidicola subsp. Acyrthosiphon pisum (strain APS) (Acyrthosiphon pisum symbiotic bacterium).